We begin with the raw amino-acid sequence, 512 residues long: MIWHVQNENFILDSTRIFMKAFHLLLFDGSFIFPECILIFGLILLLMIDLTSDQKDIPWLYFISSTSFVMSITALLFRWREEPMISFSGNFQTNNFNEIFQFLILLCSTLCIPLSVEYIECTEMAITEFLLFILTATLGGMFLCGANDLITIFVALECFSLCSYLLSGYTKKDIRSNEATMKYLLMGGASSSILVYGFSWLYGSSGGEIELQEIVNGLINTQMYNSPGISIALIFITVGIGFKLSLAPFHQWTPDVYEGSPTPVVAFLSVTSKVAALALATRIFDIPFYFSSNEWHLLLEILAILSMIFGNLIAITQTSMKRMLAYSSIGQIGYVIIGIIVGDSNGGYASMITYMLFYIAMNLGTFACIILFGLRTGTDNIRDYAGLYTKDPFLALSLALCLLSLGGLPPLAGFFGKLYLFWCGWQAGLYFLVSIGLLTSVLSIYYYLKIIKLLMTGRNQEITPHMRNYRISPLRSNNSIELSMIVCVIASTILGISMNPIIAIAQDTLFSF.

A run of 14 helical transmembrane segments spans residues Phe-31–Thr-51, Ile-57–Phe-77, Ile-99–Ile-119, Met-124–Cys-144, Leu-149–Tyr-169, Tyr-183–Gly-203, Ile-229–Phe-249, Pro-261–Thr-281, Trp-295–Ile-315, Met-323–Asp-343, Tyr-354–Leu-374, Ala-395–Phe-415, Leu-418–Leu-438, and Met-484–Ile-504.

The protein belongs to the complex I subunit 2 family. NDH is composed of at least 16 different subunits, 5 of which are encoded in the nucleus.

Its subcellular location is the plastid. The protein resides in the chloroplast thylakoid membrane. It carries out the reaction a plastoquinone + NADH + (n+1) H(+)(in) = a plastoquinol + NAD(+) + n H(+)(out). The enzyme catalyses a plastoquinone + NADPH + (n+1) H(+)(in) = a plastoquinol + NADP(+) + n H(+)(out). Functionally, NDH shuttles electrons from NAD(P)H:plastoquinone, via FMN and iron-sulfur (Fe-S) centers, to quinones in the photosynthetic chain and possibly in a chloroplast respiratory chain. The immediate electron acceptor for the enzyme in this species is believed to be plastoquinone. Couples the redox reaction to proton translocation, and thus conserves the redox energy in a proton gradient. The protein is NAD(P)H-quinone oxidoreductase subunit 2 B, chloroplastic of Arabidopsis thaliana (Mouse-ear cress).